A 483-amino-acid chain; its full sequence is Wax ester synthase/diacylglycerol acyltransferase 10 (483 aa).

The Cytoplasmic portion of the chain corresponds to M1 to R203. Residue H143 is the Proton acceptor of the active site. The chain crosses the membrane as a helical span at residues L204–F222. Topologically, residues K223 to D483 are lumenal. N-linked (GlcNAc...) asparagine glycans are attached at residues N394 and N399.

This sequence in the N-terminal section; belongs to the long-chain O-acyltransferase family. Mostly expressed in roots.

The protein resides in the cell membrane. It localises to the endoplasmic reticulum membrane. It carries out the reaction an acyl-CoA + a 1,2-diacyl-sn-glycerol = a triacyl-sn-glycerol + CoA. The catalysed reaction is a long chain fatty alcohol + a fatty acyl-CoA = a wax ester + CoA. It participates in glycerolipid metabolism; triacylglycerol biosynthesis. The protein operates within lipid metabolism. In terms of biological role, bifunctional wax ester synthase/diacylglycerol acyltransferase. Involved in cuticular wax biosynthesis. This Arabidopsis thaliana (Mouse-ear cress) protein is Wax ester synthase/diacylglycerol acyltransferase 10.